The sequence spans 168 residues: MPRSRINGNFIDKTFSIVANILLRIIPTTSGEKEAFTYYRDGMSAQSEGNYAEALQNYYEATRPEIDPYDRSYILYNIGLIHTSNGEHTKALEYYFRALERNPFLPQAFNNMAVICHYRGEQAILQGDSEIAEAWSDQAAEYWKQAIALTPGNYIEAHNWLKITRRFE.

TPR repeat units follow at residues 35 to 68 (AFTYYRDGMSAQSEGNYAEALQNYYEATRPEIDP), 72 to 105 (SYILYNIGLIHTSNGEHTKALEYYFRALERNPFL), and 120 to 153 (GEQAILQGDSEIAEAWSDQAAEYWKQAIALTPGN).

Belongs to the Ycf3 family.

The protein localises to the plastid. It is found in the chloroplast thylakoid membrane. Functionally, essential for the assembly of the photosystem I (PSI) complex. May act as a chaperone-like factor to guide the assembly of the PSI subunits. The protein is Photosystem I assembly protein Ycf3 of Lemna minor (Common duckweed).